Here is a 205-residue protein sequence, read N- to C-terminus: NADH dehydrogenase (205 aa).

FMN-binding positions include 17–21 (RRSIR), glutamine 73, 158–159 (LG), and arginine 195.

It belongs to the nitroreductase family. As to quaternary structure, homodimer. It depends on FMN as a cofactor.

It carries out the reaction a ubiquinone + NADH + 5 H(+)(in) = a ubiquinol + NAD(+) + 4 H(+)(out). Its function is as follows. Can oxidize either NADH or NADPH with a preference for NADH. Can catalyze electron transfer from NADH to various electron acceptors which include, in addition to molecular oxygen, cytochrome c, 2,6 dichlorphenolindophenol, methylene blue, ferricyanide or P-nitroblue tetrazolium. The protein is NADH dehydrogenase (nox) of Thermus thermophilus (strain ATCC 27634 / DSM 579 / HB8).